The chain runs to 155 residues: Xanthine-guanine phosphoribosyltransferase 2 (155 aa).

5-phospho-alpha-D-ribose 1-diphosphate-binding positions include 37 to 38 (RG) and 91 to 99 (DDLVDTGNT). Position 92 (D92) interacts with Mg(2+). Guanine contacts are provided by D95 and I138. Residues D95 and I138 each coordinate xanthine. Residues 95-99 (DTGNT) and 137-138 (WI) contribute to the GMP site.

The protein belongs to the purine/pyrimidine phosphoribosyltransferase family. XGPT subfamily. In terms of assembly, homotetramer. The cofactor is Mg(2+).

It is found in the cell inner membrane. It carries out the reaction GMP + diphosphate = guanine + 5-phospho-alpha-D-ribose 1-diphosphate. The enzyme catalyses XMP + diphosphate = xanthine + 5-phospho-alpha-D-ribose 1-diphosphate. It catalyses the reaction IMP + diphosphate = hypoxanthine + 5-phospho-alpha-D-ribose 1-diphosphate. It participates in purine metabolism; GMP biosynthesis via salvage pathway; GMP from guanine: step 1/1. The protein operates within purine metabolism; XMP biosynthesis via salvage pathway; XMP from xanthine: step 1/1. Functionally, purine salvage pathway enzyme that catalyzes the transfer of the ribosyl-5-phosphate group from 5-phospho-alpha-D-ribose 1-diphosphate (PRPP) to the N9 position of the 6-oxopurines guanine and xanthine to form the corresponding ribonucleotides GMP (guanosine 5'-monophosphate) and XMP (xanthosine 5'-monophosphate), with the release of PPi. To a lesser extent, also acts on hypoxanthine. In Haemophilus influenzae (strain 86-028NP), this protein is Xanthine-guanine phosphoribosyltransferase 2.